The chain runs to 561 residues: Putative transport protein CKO_02260 (561 aa).

The next 5 helical transmembrane spans lie at 8-28 (LLNG…LCLG), 32-52 (LGSV…LLGQ), 66-86 (FMLF…SIFF), 94-114 (MLAL…GKLF), and 158-178 (NLSL…IVGA). 2 RCK C-terminal domains span residues 200 to 288 (RGLD…SFRN) and 292 to 373 (VFDR…RIGF). 5 consecutive transmembrane segments (helical) span residues 383–403 (LLAF…TFQF), 406–426 (FSFG…LGFL), 447–467 (FGLM…IGNG), 475–495 (MLIA…LFGA), and 540–560 (AIAN…WPGL).

It belongs to the AAE transporter (TC 2.A.81) family. YbjL subfamily.

It is found in the cell membrane. The chain is Putative transport protein CKO_02260 from Citrobacter koseri (strain ATCC BAA-895 / CDC 4225-83 / SGSC4696).